The primary structure comprises 268 residues: L-aspartate dehydrogenase (268 aa).

The NAD(+) site is built by A125 and N191. H221 is an active-site residue.

The protein belongs to the L-aspartate dehydrogenase family.

It catalyses the reaction L-aspartate + NADP(+) + H2O = oxaloacetate + NH4(+) + NADPH + H(+). It carries out the reaction L-aspartate + NAD(+) + H2O = oxaloacetate + NH4(+) + NADH + H(+). Its pathway is cofactor biosynthesis; NAD(+) biosynthesis; iminoaspartate from L-aspartate (dehydrogenase route): step 1/1. Its function is as follows. Specifically catalyzes the NAD or NADP-dependent dehydrogenation of L-aspartate to iminoaspartate. The sequence is that of L-aspartate dehydrogenase from Ralstonia nicotianae (strain ATCC BAA-1114 / GMI1000) (Ralstonia solanacearum).